The primary structure comprises 393 residues: NADH-quinone oxidoreductase subunit D (393 aa).

This sequence belongs to the complex I 49 kDa subunit family. In terms of assembly, NDH-1 is composed of 14 different subunits. Subunits NuoB, C, D, E, F, and G constitute the peripheral sector of the complex.

The protein resides in the cell inner membrane. The catalysed reaction is a quinone + NADH + 5 H(+)(in) = a quinol + NAD(+) + 4 H(+)(out). Its function is as follows. NDH-1 shuttles electrons from NADH, via FMN and iron-sulfur (Fe-S) centers, to quinones in the respiratory chain. The immediate electron acceptor for the enzyme in this species is believed to be ubiquinone. Couples the redox reaction to proton translocation (for every two electrons transferred, four hydrogen ions are translocated across the cytoplasmic membrane), and thus conserves the redox energy in a proton gradient. This is NADH-quinone oxidoreductase subunit D from Ehrlichia chaffeensis (strain ATCC CRL-10679 / Arkansas).